A 1083-amino-acid polypeptide reads, in one-letter code: UPF0182 protein BAD_0641 (1083 aa).

The tract at residues Met1 to Pro72 is disordered. The next 7 membrane-spanning stretches (helical) occupy residues Ile78–Gln98, Leu125–Ile145, Ile178–Trp198, Ser239–Ile259, Ile281–Phe301, Val325–Met345, and Val372–Leu392. Residues Asp976–Trp1061 are disordered. Composition is skewed to basic and acidic residues over residues Thr991–Gln1013 and Lys1050–Asp1060.

It belongs to the UPF0182 family.

Its subcellular location is the cell membrane. This is UPF0182 protein BAD_0641 from Bifidobacterium adolescentis (strain ATCC 15703 / DSM 20083 / NCTC 11814 / E194a).